The following is a 118-amino-acid chain: Small ribosomal subunit protein uS13 (118 aa).

Residues 94–118 (SLPVRGQRSKTNARTRKGPRKAIKK) are disordered.

This sequence belongs to the universal ribosomal protein uS13 family. Part of the 30S ribosomal subunit. Forms a loose heterodimer with protein S19. Forms two bridges to the 50S subunit in the 70S ribosome.

Functionally, located at the top of the head of the 30S subunit, it contacts several helices of the 16S rRNA. In the 70S ribosome it contacts the 23S rRNA (bridge B1a) and protein L5 of the 50S subunit (bridge B1b), connecting the 2 subunits; these bridges are implicated in subunit movement. Contacts the tRNAs in the A and P-sites. The chain is Small ribosomal subunit protein uS13 from Psychromonas ingrahamii (strain DSM 17664 / CCUG 51855 / 37).